A 681-amino-acid chain; its full sequence is Sodium-dependent phosphate transporter 1 (681 aa).

6 helical membrane passes run 25–45, 66–86, 106–126, 162–182, 201–221, and 234–254; these read NLWMLILGFIIAFVLAFSVGA, ACILASIFETVGSALLGAKVS, LMAGSVSAMFGSAVWQLVASF, IVMSWFVSPLLSGIMSGILFF, ALPIFYACTIGINLFSIMYTG, and GTILISVGCAVFCALIVWFFV. The disordered stretch occupies residues 266 to 295; it reads VKSSPSESPLMEKKSNLKEDHEETKMAPGD. 2 positions are modified to phosphoserine: serine 269 and serine 273. Residues 275–295 show a composition bias toward basic and acidic residues; sequence LMEKKSNLKEDHEETKMAPGD. The chain crosses the membrane as a helical span at residues 514-534; sequence VSLLFQFLQILTACFGSFAHG. An a region spans residues 553 to 560; sequence KQEASTKA. Helical transmembrane passes span 561 to 581, 602 to 622, and 652 to 672; these read ATPIWLLLYGGVGICMGLWVW, FSIELASALTVVIASNIGLPI, and IFMAWFVTVPISGVISAAIMA.

This sequence belongs to the inorganic phosphate transporter (PiT) (TC 2.A.20) family. In terms of tissue distribution, ubiquitously expressed.

The protein localises to the cell membrane. It carries out the reaction 2 Na(+)(out) + phosphate(out) = 2 Na(+)(in) + phosphate(in). In terms of biological role, sodium-phosphate symporter which preferentially transports the monovalent form of phosphate with a stoichiometry of two sodium ions per phosphate ion. May play a role in extracellular matrix and cartilage calcification as well as in vascular calcification. Essential for cell proliferation but this function is independent of its phosphate transporter activity. Its function is as follows. (Microbial infection) May function as a retroviral receptor but do not confer infection susceptibility to Gibbon Ape Leukemia Virus (GaLV), Simian sarcoma-associated virus (SSAV) and Feline leukemia virus subgroup B (FeLV-B). This chain is Sodium-dependent phosphate transporter 1 (Slc20a1), found in Mus musculus (Mouse).